The primary structure comprises 311 residues: Heme A synthase (311 aa).

The Cytoplasmic portion of the chain corresponds to 1-6 (MQRFIK). The helical transmembrane segment at 7–27 (WLAVITSLDLLIVLLGGALVT) threads the bilayer. At 28 to 62 (KTGSGQGCGKSWPLCNGEFVPSNLSMETIIELSHR) the chain is on the extracellular side. A disulfide bridge connects residues Cys35 and Cys42. Glu58 is a catalytic residue. Heme o is bound at residue His61. A helical membrane pass occupies residues 63–83 (LTSGSAGILVTLLCILSWKYY). Over 84–91 (KHVRETKT) the chain is Cytoplasmic. The chain crosses the membrane as a helical span at residues 92–112 (LAILSFVFLVAQALMGAAAVV). At 113–121 (WGQMPAVLA) the chain is on the extracellular side. The chain crosses the membrane as a helical span at residues 122-142 (IHFGISLISFASVILLTCLIF). Heme o is bound at residue His123. Residues 143-159 (EIDQKFDARSLIMDKKM) lie on the Cytoplasmic side of the membrane. Residues 160-180 (KFHIYGVTIYSYIVVYTGALV) traverse the membrane as a helical segment. Residues 181 to 211 (RHERASLACPDFPLCSKNRPMPTQLHEWVQM) lie on the Extracellular side of the membrane. An intrachain disulfide couples Cys189 to Cys195. Residues 212–232 (GHRVAAMLIFAWILYAMILAI) form a helical membrane-spanning segment. Residue His213 participates in heme b binding. The Cytoplasmic portion of the chain corresponds to 233 to 243 (RHYKQQPVVYW). A helical transmembrane segment spans residues 244 to 264 (GWIISFILVTLQAVVGVLVVF). Residues 265-271 (TNASLAM) lie on the Extracellular side of the membrane. A helical membrane pass occupies residues 272-292 (ALLHSLFISCLFAVLCYLVML). His275 provides a ligand contact to heme b. Residues 293 to 311 (GTRSKVNAKEAELTSKQTK) lie on the Cytoplasmic side of the membrane.

The protein belongs to the COX15/CtaA family. Type 1 subfamily. Interacts with CtaB. Heme b is required as a cofactor.

It is found in the cell membrane. The catalysed reaction is Fe(II)-heme o + 2 A + H2O = Fe(II)-heme a + 2 AH2. Its pathway is porphyrin-containing compound metabolism; heme A biosynthesis; heme A from heme O: step 1/1. Catalyzes the conversion of heme O to heme A by two successive hydroxylations of the methyl group at C8. The first hydroxylation forms heme I, the second hydroxylation results in an unstable dihydroxymethyl group, which spontaneously dehydrates, resulting in the formyl group of heme A. In Bacillus cereus (strain ATCC 14579 / DSM 31 / CCUG 7414 / JCM 2152 / NBRC 15305 / NCIMB 9373 / NCTC 2599 / NRRL B-3711), this protein is Heme A synthase.